A 235-amino-acid chain; its full sequence is Vinculin (235 aa).

Belongs to the vinculin/alpha-catenin family. In terms of assembly, exhibits self-association properties. Post-translationally, phosphorylated on serines, threonines and tyrosines. In terms of processing, acetylated by myristic acid and/or palmitic acid.

The protein localises to the cell membrane. The protein resides in the cell junction. It localises to the adherens junction. Its subcellular location is the focal adhesion. It is found in the cytoplasm. The protein localises to the cytoskeleton. The protein resides in the sarcolemma. It localises to the cell projection. Its subcellular location is the podosome. In terms of biological role, involved in cell adhesion. May be involved in the attachment of the actin-based microfilaments to the plasma membrane. The protein is Vinculin (vcl) of Xenopus laevis (African clawed frog).